The chain runs to 332 residues: 2,3-diketo-L-gulonate reductase (332 aa).

Histidine 44 acts as the Proton donor in catalysis. Residues 168–174 (ITMVDMS), 224–225 (WK), and 304–306 (GHE) each bind NAD(+).

Belongs to the LDH2/MDH2 oxidoreductase family. DlgD subfamily. As to quaternary structure, homodimer.

Its subcellular location is the cytoplasm. The catalysed reaction is 3-dehydro-L-gulonate + NAD(+) = 2,3-dioxo-L-gulonate + NADH + H(+). It catalyses the reaction 3-dehydro-L-gulonate + NADP(+) = 2,3-dioxo-L-gulonate + NADPH + H(+). Catalyzes the reduction of 2,3-diketo-L-gulonate in the presence of NADH, to form 3-keto-L-gulonate. This Pasteurella multocida (strain Pm70) protein is 2,3-diketo-L-gulonate reductase.